A 117-amino-acid polypeptide reads, in one-letter code: Immunoglobulin heavy variable 3-5 (117 aa).

The signal sequence occupies residues 1 to 18; the sequence is MKMFTLLYLLTVVPGILS. The region spanning 19-117 is the Ig-like domain; sequence DVQLQESGPG…EDTATYYCAR (99 aa). Cysteines 40 and 115 form a disulfide.

The sequence is that of Immunoglobulin heavy variable 3-5 from Mus musculus (Mouse).